The following is a 272-amino-acid chain: MSIQKQIMNDLHVKPSIDPKQEIEDRVNFLKQYLKKTGAKGFVLGISGGQDSTLAGRLAQLAAESIREEGGNAEFIAVRLPHGTQQDEDDAQMALKFIKPDKSWTFDIKSAVSAFTDQYKKDTGDQLSDFNKGNVKARMRMIAQYAIGGQEGLLVIGTDHAAEAVTGFFTKYGDGGADLLPLTGLTKRQGRRLLEELGAPERLYLKLPTADLLDEKPQQTDETELGITYNDIDDYLEGKDVSSEVIEALEKRYLSTEHKRQVPASMFDDWWK.

45–52 (GISGGQDS) contacts ATP. Asp-51 is a Mg(2+) binding site. Position 138 (Arg-138) interacts with deamido-NAD(+). Residue Thr-158 coordinates ATP. Glu-163 contributes to the Mg(2+) binding site. Deamido-NAD(+)-binding residues include Lys-171 and Asp-178. Lys-187 and Thr-209 together coordinate ATP. Residue 258–259 (HK) coordinates deamido-NAD(+).

The protein belongs to the NAD synthetase family. In terms of assembly, homodimer.

It carries out the reaction deamido-NAD(+) + NH4(+) + ATP = AMP + diphosphate + NAD(+) + H(+). It functions in the pathway cofactor biosynthesis; NAD(+) biosynthesis; NAD(+) from deamido-NAD(+) (ammonia route): step 1/1. Catalyzes the ATP-dependent amidation of deamido-NAD to form NAD. Uses ammonia as a nitrogen source. This chain is NH(3)-dependent NAD(+) synthetase, found in Bacillus velezensis (strain DSM 23117 / BGSC 10A6 / LMG 26770 / FZB42) (Bacillus amyloliquefaciens subsp. plantarum).